The following is a 458-amino-acid chain: Sugar transporter ERD6-like 10 (458 aa).

The next 12 helical transmembrane spans lie at 17 to 37, 66 to 86, 96 to 116, 119 to 139, 150 to 170, 174 to 194, 257 to 277, 292 to 312, 319 to 339, 350 to 370, 393 to 413, and 419 to 439; these read ITAC…SYGC, FLNL…VILG, LFCI…WLDL, ISLG…IAEI, ASTL…GTVI, VLAV…YFIP, LVVG…GITY, LGSM…LILV, PLLL…GVSF, FIPV…AIGI, IVAL…NFMF, and GTFY…WMLV.

It belongs to the major facilitator superfamily. Sugar transporter (TC 2.A.1.1) family.

It localises to the membrane. Its function is as follows. Sugar transporter. This Arabidopsis thaliana (Mouse-ear cress) protein is Sugar transporter ERD6-like 10.